A 721-amino-acid polypeptide reads, in one-letter code: Polyphosphate kinase (721 aa).

ATP is bound at residue Asn54. The Mg(2+) site is built by Arg379 and Arg409. One can recognise a PLD phosphodiesterase domain in the interval 434-468 (THLKTHSKIALVVKRIGGELTSFVHLGTGNYNDKT). His439 acts as the Phosphohistidine intermediate in catalysis. The ATP site is built by Tyr472, Arg568, and His596.

It belongs to the polyphosphate kinase 1 (PPK1) family. Requires Mg(2+) as cofactor. An intermediate of this reaction is the autophosphorylated ppk in which a phosphate is covalently linked to a histidine residue through a N-P bond.

The enzyme catalyses [phosphate](n) + ATP = [phosphate](n+1) + ADP. In terms of biological role, catalyzes the reversible transfer of the terminal phosphate of ATP to form a long-chain polyphosphate (polyP). The sequence is that of Polyphosphate kinase from Staphylococcus haemolyticus (strain JCSC1435).